A 237-amino-acid polypeptide reads, in one-letter code: MKRPIIIALDFPTAERALAFLDQFPADLHVTVKIGMELFYAAGPSIVTDVQARGHAVFLDLKLHDIPNTVESAMRVIGRLGVTYTTVHAAGGHVMLSAAKRGLVAGAMAAGVTAPKLLAITQLTSTNQAILNQDQQIMGTVRASVVHYAKLARASDCDGVICSAQEVQAIHTAVGADFLGITPGIRPASAQSDDQQRVMTPAAAAKAGSNGLVIGRPITQAAEPVQAYRDIMTEWSN.

Substrate is bound by residues Asp-10, Lys-33, 60 to 69 (DLKLHDIPNT), Thr-124, Arg-186, Gln-195, Gly-215, and Arg-216. Catalysis depends on Lys-62, which acts as the Proton donor.

The protein belongs to the OMP decarboxylase family. Type 1 subfamily. Homodimer.

The enzyme catalyses orotidine 5'-phosphate + H(+) = UMP + CO2. It participates in pyrimidine metabolism; UMP biosynthesis via de novo pathway; UMP from orotate: step 2/2. In terms of biological role, catalyzes the decarboxylation of orotidine 5'-monophosphate (OMP) to uridine 5'-monophosphate (UMP). This Lactiplantibacillus plantarum (strain ATCC BAA-793 / NCIMB 8826 / WCFS1) (Lactobacillus plantarum) protein is Orotidine 5'-phosphate decarboxylase.